A 276-amino-acid polypeptide reads, in one-letter code: Putative pyruvate, phosphate dikinase regulatory protein 1 (276 aa).

157 to 164 (GVSRTSKT) contributes to the ADP binding site.

The protein belongs to the pyruvate, phosphate/water dikinase regulatory protein family. PDRP subfamily.

The catalysed reaction is N(tele)-phospho-L-histidyl/L-threonyl-[pyruvate, phosphate dikinase] + ADP = N(tele)-phospho-L-histidyl/O-phospho-L-threonyl-[pyruvate, phosphate dikinase] + AMP + H(+). It catalyses the reaction N(tele)-phospho-L-histidyl/O-phospho-L-threonyl-[pyruvate, phosphate dikinase] + phosphate + H(+) = N(tele)-phospho-L-histidyl/L-threonyl-[pyruvate, phosphate dikinase] + diphosphate. Its function is as follows. Bifunctional serine/threonine kinase and phosphorylase involved in the regulation of the pyruvate, phosphate dikinase (PPDK) by catalyzing its phosphorylation/dephosphorylation. The polypeptide is Putative pyruvate, phosphate dikinase regulatory protein 1 (Staphylococcus haemolyticus (strain JCSC1435)).